Consider the following 313-residue polypeptide: Methionyl-tRNA formyltransferase (313 aa).

113-116 (SLLP) is a binding site for (6S)-5,6,7,8-tetrahydrofolate.

The protein belongs to the Fmt family.

The enzyme catalyses L-methionyl-tRNA(fMet) + (6R)-10-formyltetrahydrofolate = N-formyl-L-methionyl-tRNA(fMet) + (6S)-5,6,7,8-tetrahydrofolate + H(+). Functionally, attaches a formyl group to the free amino group of methionyl-tRNA(fMet). The formyl group appears to play a dual role in the initiator identity of N-formylmethionyl-tRNA by promoting its recognition by IF2 and preventing the misappropriation of this tRNA by the elongation apparatus. The sequence is that of Methionyl-tRNA formyltransferase from Francisella tularensis subsp. novicida (strain U112).